Reading from the N-terminus, the 477-residue chain is Xylose isomerase (477 aa).

H142 is an active-site residue. Mn(2+)-binding residues include E273, E309, H312, D337, D348, D350, and D380.

It belongs to the xylose isomerase family. The cofactor is Mn(2+).

The catalysed reaction is alpha-D-xylose = alpha-D-xylulofuranose. This Arabidopsis thaliana (Mouse-ear cress) protein is Xylose isomerase (XYLA).